A 217-amino-acid chain; its full sequence is Large ribosomal subunit protein uL1 (217 aa).

Position 2 is an N-acetylserine (Ser-2). A Phosphotyrosine modification is found at Tyr-11. An N6-acetyllysine mark is found at Lys-91 and Lys-106. Position 118 is an N6-acetyllysine; alternate (Lys-118). A Glycyl lysine isopeptide (Lys-Gly) (interchain with G-Cter in SUMO1); alternate cross-link involves residue Lys-118. Lys-118 participates in a covalent cross-link: Glycyl lysine isopeptide (Lys-Gly) (interchain with G-Cter in SUMO2); alternate.

Belongs to the universal ribosomal protein uL1 family. As to quaternary structure, component of the large ribosomal subunit.

The protein localises to the cytoplasm. Its function is as follows. Component of the large ribosomal subunit. The ribosome is a large ribonucleoprotein complex responsible for the synthesis of proteins in the cell. This chain is Large ribosomal subunit protein uL1 (RPL10A), found in Macaca fascicularis (Crab-eating macaque).